Reading from the N-terminus, the 83-residue chain is Small ribosomal subunit protein bS20 (83 aa).

Belongs to the bacterial ribosomal protein bS20 family.

Functionally, binds directly to 16S ribosomal RNA. The chain is Small ribosomal subunit protein bS20 from Flavobacterium johnsoniae (strain ATCC 17061 / DSM 2064 / JCM 8514 / BCRC 14874 / CCUG 350202 / NBRC 14942 / NCIMB 11054 / UW101) (Cytophaga johnsonae).